An 84-amino-acid polypeptide reads, in one-letter code: Putative membrane protein insertion efficiency factor (84 aa).

This sequence belongs to the UPF0161 family.

Its subcellular location is the cell inner membrane. Its function is as follows. Could be involved in insertion of integral membrane proteins into the membrane. This chain is Putative membrane protein insertion efficiency factor, found in Shewanella denitrificans (strain OS217 / ATCC BAA-1090 / DSM 15013).